Consider the following 129-residue polypeptide: Small ribosomal subunit protein bS16m (129 aa).

This sequence belongs to the bacterial ribosomal protein bS16 family. Component of the mitochondrial ribosome small subunit (28S) which comprises a 12S rRNA and about 30 distinct proteins.

Its subcellular location is the mitochondrion. The chain is Small ribosomal subunit protein bS16m (mRpS16) from Drosophila melanogaster (Fruit fly).